We begin with the raw amino-acid sequence, 171 residues long: 3-hydroxydecanoyl-[acyl-carrier-protein] dehydratase (171 aa).

His70 is a catalytic residue.

It belongs to the thioester dehydratase family. FabA subfamily. In terms of assembly, homodimer.

Its subcellular location is the cytoplasm. It carries out the reaction a (3R)-hydroxyacyl-[ACP] = a (2E)-enoyl-[ACP] + H2O. The enzyme catalyses (3R)-hydroxydecanoyl-[ACP] = (2E)-decenoyl-[ACP] + H2O. The catalysed reaction is (2E)-decenoyl-[ACP] = (3Z)-decenoyl-[ACP]. It participates in lipid metabolism; fatty acid biosynthesis. Necessary for the introduction of cis unsaturation into fatty acids. Catalyzes the dehydration of (3R)-3-hydroxydecanoyl-ACP to E-(2)-decenoyl-ACP and then its isomerization to Z-(3)-decenoyl-ACP. Can catalyze the dehydratase reaction for beta-hydroxyacyl-ACPs with saturated chain lengths up to 16:0, being most active on intermediate chain length. The sequence is that of 3-hydroxydecanoyl-[acyl-carrier-protein] dehydratase from Shewanella loihica (strain ATCC BAA-1088 / PV-4).